Consider the following 191-residue polypeptide: GDP-mannose pyrophosphatase (191 aa).

Residues tyrosine 17, 38–40 (KRE), arginine 67, and 85–87 (AGL) each bind GDP-alpha-D-mannose. The region spanning 43–180 (DRGNGATILL…EIRDGKTVLL (138 aa)) is the Nudix hydrolase domain. Mg(2+)-binding residues include alanine 85, glutamate 100, and glutamate 104. The Nudix box motif lies at 86-106 (GLLDNDEPEVCIRKEAIEETG). Residues glutamate 104, glutamate 127, 150–151 (DE), and lysine 176 each bind GDP-alpha-D-mannose. A Mg(2+)-binding site is contributed by glutamate 151.

The protein belongs to the Nudix hydrolase family. NudK subfamily. Homodimer. The cofactor is Mg(2+).

It carries out the reaction GDP-alpha-D-mannose + H2O = alpha-D-mannose 1-phosphate + GMP + 2 H(+). Its function is as follows. Nucleoside diphosphate sugar hydrolase that hydrolyzes GDP-mannose as its preferred substrate, yielding GMP and mannose-1-phosphate. This chain is GDP-mannose pyrophosphatase (nudK), found in Salmonella typhi.